An 86-amino-acid polypeptide reads, in one-letter code: UPF0297 protein CA_C1679 (86 aa).

It belongs to the UPF0297 family.

The polypeptide is UPF0297 protein CA_C1679 (Clostridium acetobutylicum (strain ATCC 824 / DSM 792 / JCM 1419 / IAM 19013 / LMG 5710 / NBRC 13948 / NRRL B-527 / VKM B-1787 / 2291 / W)).